A 265-amino-acid chain; its full sequence is Capsule polysaccharide export inner-membrane protein BexB (265 aa).

A run of 6 helical transmembrane segments spans residues 37–57, 64–84, 121–141, 148–168, 178–198, and 235–255; these read IGFLWLFVEPLLMTFFIVMMW, KFSTLNMIAFVMTGYPMAMMW, VAGASIAQILFMAVLVLIGWI, FYMLMAWFLMAMFAFALGLII, FGKIWGTLSFVLLPISGAFFF, and ESIGFLVVSDLALLLMGLVMV. Residues 37–258 enclose the ABC transmembrane type-2 domain; it reads IGFLWLFVEP…LMGLVMVKNF (222 aa).

This sequence belongs to the ABC-2 integral membrane protein family.

It is found in the cell inner membrane. May form an ATP-driven capsule polysaccharide export apparatus, in association with the BexA, BexC and BexD proteins. In Haemophilus influenzae, this protein is Capsule polysaccharide export inner-membrane protein BexB (bexB).